The chain runs to 600 residues: Malto-oligosyltrehalose trehalohydrolase (600 aa).

The tract at residues 1 to 34 (MTQTQPVTPTPPASFQTQHDPRTRLGATPLPGGA) is disordered. 273 to 278 (RLDATP) is a binding site for substrate. The active-site Nucleophile is D275. E308 (proton donor) is an active-site residue. Residues 328-332 (DDFHH), E376, and 399-404 (HDQIGN) each bind substrate.

It belongs to the glycosyl hydrolase 13 family. As to quaternary structure, monomer.

The protein resides in the cytoplasm. It carries out the reaction hydrolysis of (1-&gt;4)-alpha-D-glucosidic linkage in 4-alpha-D-[(1-&gt;4)-alpha-D-glucanosyl]n trehalose to yield trehalose and (1-&gt;4)-alpha-D-glucan.. It participates in glycan biosynthesis; trehalose biosynthesis. This Deinococcus radiodurans (strain ATCC 13939 / DSM 20539 / JCM 16871 / CCUG 27074 / LMG 4051 / NBRC 15346 / NCIMB 9279 / VKM B-1422 / R1) protein is Malto-oligosyltrehalose trehalohydrolase (treZ).